The primary structure comprises 216 residues: ATP synthase subunit a (216 aa).

7 helical membrane-spanning segments follow: residues 1-21, 62-82, 88-108, 119-139, 149-169, 174-194, and 196-216; these read MEYS…IFVL, LIAA…VPGF, NINT…FEGF, FMGP…ISHI, LFAN…LVIK, LVVS…AIFI, and TYIF…HEEH.

The protein belongs to the ATPase A chain family. As to quaternary structure, F-type ATPases have 2 components, CF(1) - the catalytic core - and CF(0) - the membrane proton channel. CF(1) has five subunits: alpha(3), beta(3), gamma(1), delta(1), epsilon(1). CF(0) has three main subunits: a(1), b(2) and c(9-12). The alpha and beta chains form an alternating ring which encloses part of the gamma chain. CF(1) is attached to CF(0) by a central stalk formed by the gamma and epsilon chains, while a peripheral stalk is formed by the delta and b chains.

Its subcellular location is the cell inner membrane. In terms of biological role, key component of the proton channel; it plays a direct role in the translocation of protons across the membrane. The sequence is that of ATP synthase subunit a from Aquifex aeolicus (strain VF5).